A 1438-amino-acid polypeptide reads, in one-letter code: Gag-Pol polyprotein (1438 aa).

Gly-2 is lipidated: N-myristoyl glycine; by host. A Nuclear export signal motif is present at residues 16–22 (WEKIYLR). Residues 26 to 32 (KKKYMMK) carry the Nuclear localization signal motif. 2 CCHC-type zinc fingers span residues 385–402 (VKCF…NCKA) and 406–423 (KGCW…NCTN). A disordered region spans residues 439-481 (GKAREFPSEETRTNSSTNRELRVQGGGTCPEGGSEERGDREQA). Positions 440-450 (KAREFPSEETR) are enriched in basic and acidic residues. The region spanning 507–576 (KEALLDTGAD…TPVNIIGRNI (70 aa)) is the Peptidase A2 domain. Residue Asp-512 is the For protease activity; shared with dimeric partner of the active site. The Reverse transcriptase domain occupies 630–820 (EGKISRVGPE…PPFLWMGYEL (191 aa)). Mg(2+)-binding residues include Asp-696, Asp-771, and Asp-772. The interval 813 to 821 (FLWMGYELH) is RT 'primer grip'. The Tryptophan repeat motif motif lies at 984–1000 (WEAWWTDYWQATWIPEW). The RNase H type-1 domain maps to 1020 to 1143 (IPGAETFYVD…IDKLVSSGIR (124 aa)). Positions 1029, 1064, 1084, and 1135 each coordinate Mg(2+). The Integrase-type zinc finger occupies 1149-1190 (DGIDKAQEEHEKYHNNWRAMASDFNLPPIVAKEIVANCDKCQ). Residues His-1158, His-1162, Cys-1186, and Cys-1189 each contribute to the Zn(2+) site. The region spanning 1200 to 1350 (VDCSPGIWQL…SAGERIIDIL (151 aa)) is the Integrase catalytic domain. 2 residues coordinate Mg(2+): Asp-1210 and Asp-1262. Residues 1369–1416 (FRVYYRDSRDPIWKGPAKLLWKGEGAVVLQDQEEIKVVPRRKAKIIRD) constitute a DNA-binding region (integrase-type).

As to quaternary structure, homotrimer. Interacts with gp41 (via C-terminus). Homodimer. The active site consists of two apposed aspartic acid residues. In terms of assembly, heterodimer of p66 RT and p51 RT (RT p66/p51). Heterodimerization of RT is essential for DNA polymerase activity. Despite the sequence identities, p66 RT and p51 RT have distinct folding. As to quaternary structure, homotetramer; may further associate as a homohexadecamer. Mg(2+) is required as a cofactor. In terms of processing, specific enzymatic cleavages by the viral protease yield mature proteins. The protease is released by autocatalytic cleavage. The polyprotein is cleaved during and after budding, this process is termed maturation. Proteolytic cleavage of p66 RT removes the RNase H domain to yield the p51 RT subunit. Capsid protein p24 is phosphorylated.

The protein resides in the virion. It localises to the host nucleus. The protein localises to the host cytoplasm. It is found in the host cell membrane. It carries out the reaction Specific for a P1 residue that is hydrophobic, and P1' variable, but often Pro.. The enzyme catalyses Endohydrolysis of RNA in RNA/DNA hybrids. Three different cleavage modes: 1. sequence-specific internal cleavage of RNA. Human immunodeficiency virus type 1 and Moloney murine leukemia virus enzymes prefer to cleave the RNA strand one nucleotide away from the RNA-DNA junction. 2. RNA 5'-end directed cleavage 13-19 nucleotides from the RNA end. 3. DNA 3'-end directed cleavage 15-20 nucleotides away from the primer terminus.. It catalyses the reaction 3'-end directed exonucleolytic cleavage of viral RNA-DNA hybrid.. The catalysed reaction is DNA(n) + a 2'-deoxyribonucleoside 5'-triphosphate = DNA(n+1) + diphosphate. The viral protease is inhibited by many synthetic protease inhibitors (PIs), such as amprenavir, atazanavir, indinavir, loprinavir, nelfinavir, ritonavir and saquinavir. RT can be inhibited either by nucleoside RT inhibitors (NRTIs) or by non nucleoside RT inhibitors (NNRTIs). NRTIs act as chain terminators, whereas NNRTIs inhibit DNA polymerization by binding a small hydrophobic pocket near the RT active site and inducing an allosteric change in this region. Classical NRTIs are abacavir, adefovir (PMEA), didanosine (ddI), lamivudine (3TC), stavudine (d4T), tenofovir (PMPA), zalcitabine (ddC), and zidovudine (AZT). Classical NNRTIs are atevirdine (BHAP U-87201E), delavirdine, efavirenz (DMP-266), emivirine (I-EBU), and nevirapine (BI-RG-587). The tritherapies used as a basic effective treatment of AIDS associate two NRTIs and one NNRTI. Use of protease inhibitors in tritherapy regimens permit more ambitious therapeutic strategies. In terms of biological role, gag-Pol polyprotein and Gag polyprotein may regulate their own translation, by the binding genomic RNA in the 5'-UTR. At low concentration, Gag-Pol and Gag would promote translation, whereas at high concentration, the polyproteins encapsidate genomic RNA and then shut off translation. Matrix protein p17 has two main functions: in infected cell, it targets Gag and Gag-pol polyproteins to the plasma membrane via a multipartite membrane-binding signal, that includes its myristointegration complex. The myristoylation signal and the NLS exert conflicting influences its subcellular localization. The key regulation of these motifs might be phosphorylation of a portion of MA molecules on the C-terminal tyrosine at the time of virus maturation, by virion-associated cellular tyrosine kinase. Implicated in the release from host cell mediated by Vpu. Its function is as follows. Capsid protein p24 forms the conical core that encapsulates the genomic RNA-nucleocapsid complex in the virion. The core is constituted by capsid protein hexamer subunits. The core is disassembled soon after virion entry. Interaction with host PPIA/CYPA protects the virus from restriction by host TRIM5-alpha and from an unknown antiviral activity in host cells. This capsid restriction by TRIM5 is one of the factors which restricts SIV to the simian species. Functionally, nucleocapsid protein p7 encapsulates and protects viral dimeric unspliced (genomic) RNA. Binds these RNAs through its zinc fingers. Facilitates rearangement of nucleic acid secondary structure during retrotranscription of genomic RNA. This capability is referred to as nucleic acid chaperone activity. In terms of biological role, the aspartyl protease mediates proteolytic cleavages of Gag and Gag-Pol polyproteins during or shortly after the release of the virion from the plasma membrane. Cleavages take place as an ordered, step-wise cascade to yield mature proteins. This process is called maturation. Displays maximal activity during the budding process just prior to particle release from the cell. Also cleaves Nef and Vif, probably concomitantly with viral structural proteins on maturation of virus particles. Hydrolyzes host EIF4GI and PABP1 in order to shut off the capped cellular mRNA translation. The resulting inhibition of cellular protein synthesis serves to ensure maximal viral gene expression and to evade host immune response. Reverse transcriptase/ribonuclease H (RT) is a multifunctional enzyme that converts the viral dimeric RNA genome into dsDNA in the cytoplasm, shortly after virus entry into the cell. This enzyme displays a DNA polymerase activity that can copy either DNA or RNA templates, and a ribonuclease H (RNase H) activity that cleaves the RNA strand of RNA-DNA heteroduplexes in a partially processive 3' to 5' endonucleasic mode. Conversion of viral genomic RNA into dsDNA requires many steps. A tRNA binds to the primer-binding site (PBS) situated at the 5'-end of the viral RNA. RT uses the 3' end of the tRNA primer to perform a short round of RNA-dependent minus-strand DNA synthesis. The reading proceeds through the U5 region and ends after the repeated (R) region which is present at both ends of viral RNA. The portion of the RNA-DNA heteroduplex is digested by the RNase H, resulting in a ssDNA product attached to the tRNA primer. This ssDNA/tRNA hybridizes with the identical R region situated at the 3' end of viral RNA. This template exchange, known as minus-strand DNA strong stop transfer, can be either intra- or intermolecular. RT uses the 3' end of this newly synthesized short ssDNA to perform the RNA-dependent minus-strand DNA synthesis of the whole template. RNase H digests the RNA template except for two polypurine tracts (PPTs) situated at the 5'-end and near the center of the genome. It is not clear if both polymerase and RNase H activities are simultaneous. RNase H can probably proceed both in a polymerase-dependent (RNA cut into small fragments by the same RT performing DNA synthesis) and a polymerase-independent mode (cleavage of remaining RNA fragments by free RTs). Secondly, RT performs DNA-directed plus-strand DNA synthesis using the PPTs that have not been removed by RNase H as primers. PPTs and tRNA primers are then removed by RNase H. The 3' and 5' ssDNA PBS regions hybridize to form a circular dsDNA intermediate. Strand displacement synthesis by RT to the PBS and PPT ends produces a blunt ended, linear dsDNA copy of the viral genome that includes long terminal repeats (LTRs) at both ends. Its function is as follows. Integrase catalyzes viral DNA integration into the host chromosome, by performing a series of DNA cutting and joining reactions. This enzyme activity takes place after virion entry into a cell and reverse transcription of the RNA genome in dsDNA. The first step in the integration process is 3' processing. This step requires a complex comprising the viral genome, matrix protein, Vpr and integrase. This complex is called the pre-integration complex (PIC). The integrase protein removes 2 nucleotides from each 3' end of the viral DNA, leaving recessed CA OH's at the 3' ends. In the second step, the PIC enters cell nucleus. This process is mediated through integrase and Vpr proteins, and allows the virus to infect a non dividing cell. This ability to enter the nucleus is specific of lentiviruses, other retroviruses cannot and rely on cell division to access cell chromosomes. In the third step, termed strand transfer, the integrase protein joins the previously processed 3' ends to the 5' ends of strands of target cellular DNA at the site of integration. The 5'-ends are produced by integrase-catalyzed staggered cuts, 5 bp apart. A Y-shaped, gapped, recombination intermediate results, with the 5'-ends of the viral DNA strands and the 3' ends of target DNA strands remaining unjoined, flanking a gap of 5 bp. The last step is viral DNA integration into host chromosome. This involves host DNA repair synthesis in which the 5 bp gaps between the unjoined strands are filled in and then ligated. Since this process occurs at both cuts flanking the SIV genome, a 5 bp duplication of host DNA is produced at the ends of SIV integration. Alternatively, Integrase may catalyze the excision of viral DNA just after strand transfer, this is termed disintegration. This is Gag-Pol polyprotein (gag-pol) from Pan troglodytes (Chimpanzee).